A 258-amino-acid polypeptide reads, in one-letter code: Zinc import ATP-binding protein ZnuC (258 aa).

The ABC transporter domain maps to 7 to 233 (ITAKNINHAY…PAFQELFGQG (227 aa)). An ATP-binding site is contributed by 39 to 46 (GPNGAGKS).

The protein belongs to the ABC transporter superfamily. Zinc importer (TC 3.A.1.15.5) family. In terms of assembly, the complex is composed of two ATP-binding proteins (ZnuC), two transmembrane proteins (ZnuB) and a solute-binding protein (ZnuA).

Its subcellular location is the cell inner membrane. It catalyses the reaction Zn(2+)(out) + ATP(in) + H2O(in) = Zn(2+)(in) + ADP(in) + phosphate(in) + H(+)(in). Its function is as follows. Part of the ABC transporter complex ZnuABC involved in zinc import. Responsible for energy coupling to the transport system. This chain is Zinc import ATP-binding protein ZnuC, found in Hydrogenovibrio crunogenus (strain DSM 25203 / XCL-2) (Thiomicrospira crunogena).